The sequence spans 734 residues: Methionine--tRNA ligase (734 aa).

The 'HIGH' region signature appears at 12 to 22; that stretch reads PYVNNIPHLGN. Zn(2+)-binding residues include cysteine 143, cysteine 146, cysteine 155, and cysteine 158. The 'KMSKS' region signature appears at 330–334; sequence KFSKS. Lysine 333 is a binding site for ATP. Residues 570–675 form the tRNA-binding domain; it reads FREKVLLRVV…QNPIAGERII (106 aa).

It belongs to the class-I aminoacyl-tRNA synthetase family. MetG type 1 subfamily. As to quaternary structure, homodimer. Requires Zn(2+) as cofactor.

It is found in the cytoplasm. It carries out the reaction tRNA(Met) + L-methionine + ATP = L-methionyl-tRNA(Met) + AMP + diphosphate. Its function is as follows. Is required not only for elongation of protein synthesis but also for the initiation of all mRNA translation through initiator tRNA(fMet) aminoacylation. The protein is Methionine--tRNA ligase of Borreliella burgdorferi (strain ZS7) (Borrelia burgdorferi).